A 79-amino-acid polypeptide reads, in one-letter code: Small ribosomal subunit protein bS18c (79 aa).

The protein belongs to the bacterial ribosomal protein bS18 family. Part of the 30S ribosomal subunit.

It localises to the plastid. Its subcellular location is the chloroplast. This chain is Small ribosomal subunit protein bS18c, found in Chaetosphaeridium globosum (Charophycean green alga).